The sequence spans 238 residues: MKRSKAYRAAAEKINPENFYSPLEAVRLAQQTSTTKYDATVEVAIRLGVDPRKADQMVRGTVNLPHGTGKSPRVAVFAAGEKAAEASAAGADIVGSDDLVARIQEGFLEFDATVATPDQMAKVGRIARVLGPRGLMPNPKTGTVTLDIGKAVSDIKGGKINFRVDKQGNLHIVIGKTNFTDTQLIENYTVALDEIVRVKPSAAKGRYLKKITFTTTMGPGIPVDPNRTRNLLDEGAAA.

The protein belongs to the universal ribosomal protein uL1 family. As to quaternary structure, part of the 50S ribosomal subunit.

In terms of biological role, binds directly to 23S rRNA. The L1 stalk is quite mobile in the ribosome, and is involved in E site tRNA release. Functionally, protein L1 is also a translational repressor protein, it controls the translation of the L11 operon by binding to its mRNA. This Frankia casuarinae (strain DSM 45818 / CECT 9043 / HFP020203 / CcI3) protein is Large ribosomal subunit protein uL1.